A 281-amino-acid chain; its full sequence is Probable ABC transporter ATP-binding protein AZC_3926 (281 aa).

A disordered region spans residues 1–38 (MNVLSMFGRNATRETSSPAATAGRYADEGDWEGDDHQP). Residues 45-277 (LAAFGLAKSY…PDVRRLYLGE (233 aa)) enclose the ABC transporter domain. 77–84 (GPNGAGKT) is an ATP binding site.

The protein belongs to the ABC transporter superfamily.

The chain is Probable ABC transporter ATP-binding protein AZC_3926 from Azorhizobium caulinodans (strain ATCC 43989 / DSM 5975 / JCM 20966 / LMG 6465 / NBRC 14845 / NCIMB 13405 / ORS 571).